The sequence spans 517 residues: ATP synthase subunit alpha 1 (517 aa).

Residue 174–181 participates in ATP binding; sequence GDRQTGKT.

Belongs to the ATPase alpha/beta chains family. F-type ATPases have 2 components, CF(1) - the catalytic core - and CF(0) - the membrane proton channel. CF(1) has five subunits: alpha(3), beta(3), gamma(1), delta(1), epsilon(1). CF(0) has three main subunits: a(1), b(2) and c(9-12). The alpha and beta chains form an alternating ring which encloses part of the gamma chain. CF(1) is attached to CF(0) by a central stalk formed by the gamma and epsilon chains, while a peripheral stalk is formed by the delta and b chains.

It localises to the cell inner membrane. It catalyses the reaction ATP + H2O + 4 H(+)(in) = ADP + phosphate + 5 H(+)(out). Its function is as follows. Produces ATP from ADP in the presence of a proton gradient across the membrane. The alpha chain is a regulatory subunit. The chain is ATP synthase subunit alpha 1 from Albidiferax ferrireducens (strain ATCC BAA-621 / DSM 15236 / T118) (Rhodoferax ferrireducens).